Here is a 227-residue protein sequence, read N- to C-terminus: ATP synthase F(0) complex subunit a (227 aa).

Helical transmembrane passes span 14-34 (FLGI…FPSP), 69-89 (WAMI…LGLL), 98-118 (QLSM…LIGM), 139-159 (IPIL…ALGV), 165-185 (LTAG…MLSI), and 189-209 (IATL…AVAM).

It belongs to the ATPase A chain family. Component of the ATP synthase complex composed at least of ATP5F1A/subunit alpha, ATP5F1B/subunit beta, ATP5MC1/subunit c (homooctomer), MT-ATP6/subunit a, MT-ATP8/subunit 8, ATP5ME/subunit e, ATP5MF/subunit f, ATP5MG/subunit g, ATP5MK/subunit k, ATP5MJ/subunit j, ATP5F1C/subunit gamma, ATP5F1D/subunit delta, ATP5F1E/subunit epsilon, ATP5PF/subunit F6, ATP5PB/subunit b, ATP5PD/subunit d, ATP5PO/subunit OSCP. ATP synthase complex consists of a soluble F(1) head domain (subunits alpha(3) and beta(3)) - the catalytic core - and a membrane F(0) domain - the membrane proton channel (subunits c, a, 8, e, f, g, k and j). These two domains are linked by a central stalk (subunits gamma, delta, and epsilon) rotating inside the F1 region and a stationary peripheral stalk (subunits F6, b, d, and OSCP). Interacts with DNAJC30; interaction is direct.

Its subcellular location is the mitochondrion inner membrane. It catalyses the reaction H(+)(in) = H(+)(out). In terms of biological role, subunit a, of the mitochondrial membrane ATP synthase complex (F(1)F(0) ATP synthase or Complex V) that produces ATP from ADP in the presence of a proton gradient across the membrane which is generated by electron transport complexes of the respiratory chain. ATP synthase complex consist of a soluble F(1) head domain - the catalytic core - and a membrane F(1) domain - the membrane proton channel. These two domains are linked by a central stalk rotating inside the F(1) region and a stationary peripheral stalk. During catalysis, ATP synthesis in the catalytic domain of F(1) is coupled via a rotary mechanism of the central stalk subunits to proton translocation. With the subunit c (ATP5MC1), forms the proton-conducting channel in the F(0) domain, that contains two crucial half-channels (inlet and outlet) that facilitate proton movement from the mitochondrial intermembrane space (IMS) into the matrix. Protons are taken up via the inlet half-channel and released through the outlet half-channel, following a Grotthuss mechanism. In Polypterus ornatipinnis (Ornate bichir), this protein is ATP synthase F(0) complex subunit a.